The sequence spans 112 residues: MQKIRSIKKNWEFQAIINKKNQIVTNYLIFYYVKSDFFEIGISVPKKFANAVKRNYYKRQIKNALYILWKKGEIFLNFRVVLIARKNFLPLSFETKYQKLAKIFKELKRNEK.

It belongs to the RnpA family. Consists of a catalytic RNA component (M1 or rnpB) and a protein subunit.

It carries out the reaction Endonucleolytic cleavage of RNA, removing 5'-extranucleotides from tRNA precursor.. Functionally, RNaseP catalyzes the removal of the 5'-leader sequence from pre-tRNA to produce the mature 5'-terminus. It can also cleave other RNA substrates such as 4.5S RNA. The protein component plays an auxiliary but essential role in vivo by binding to the 5'-leader sequence and broadening the substrate specificity of the ribozyme. This Mesomycoplasma hyopneumoniae (strain 7448) (Mycoplasma hyopneumoniae) protein is Ribonuclease P protein component.